The primary structure comprises 817 residues: DNA replication licensing factor Mcm6 (817 aa).

The C4-type zinc finger occupies 152 to 179 (CLDCQTEIRNVEQQFKFTNPTICRNPVC). Positions 338–544 (LYQNLISSLF…VVDYAIARKI (207 aa)) constitute an MCM domain. The ATP site is built by Ser-391, Thr-392, Ala-393, Lys-394, Ser-395, and Asn-496. The Arginine finger signature appears at 520-523 (SRFD). Residues Arg-611 and Glu-614 each coordinate ADP.

The protein belongs to the MCM family. Component of the Mcm2-7 complex. The complex forms a toroidal hexameric ring with the proposed subunit order Mcm2-Mcm6-Mcm4-Mcm7-Mcm3-Mcm5. The heterodimers of Mcm4/Mcm6 and Mcm3/Mcm5 interact with Mcm2 and Mcm7. As to expression, in stage 12 embryos, strongly expressed in the CNS and weakly in the gut.

Its subcellular location is the nucleus. It catalyses the reaction ATP + H2O = ADP + phosphate + H(+). Its function is as follows. Acts as a component of the Mcm2-7 complex (Mcm complex) which is the putative replicative helicase essential for 'once per cell cycle' DNA replication initiation and elongation in eukaryotic cells. Core component of CDC45-MCM-GINS (CMG) helicase, the molecular machine that unwinds template DNA during replication, and around which the replisome is built. The active ATPase sites in the Mcm2-7 ring are formed through the interaction surfaces of two neighboring subunits such that a critical structure of a conserved arginine finger motif is provided in trans relative to the ATP-binding site of the Walker A box of the adjacent subunit. The six ATPase active sites, however, are likely to contribute differentially to the complex helicase activity Required for DNA replication and cell proliferation. Required for mitotic cycles, endocycles, and the special S phase associated with the amplification of chorion genes; has a role in origin unwinding or fork elongation at chorion loci. The protein is DNA replication licensing factor Mcm6 of Drosophila melanogaster (Fruit fly).